The sequence spans 98 residues: NADH-ubiquinone oxidoreductase chain 4L (98 aa).

Helical transmembrane passes span Thr-2–Phe-22, Leu-26–Ile-46, and Ile-61–Val-81.

Belongs to the complex I subunit 4L family. As to quaternary structure, core subunit of respiratory chain NADH dehydrogenase (Complex I) which is composed of 45 different subunits.

It localises to the mitochondrion inner membrane. It catalyses the reaction a ubiquinone + NADH + 5 H(+)(in) = a ubiquinol + NAD(+) + 4 H(+)(out). Core subunit of the mitochondrial membrane respiratory chain NADH dehydrogenase (Complex I) which catalyzes electron transfer from NADH through the respiratory chain, using ubiquinone as an electron acceptor. Part of the enzyme membrane arm which is embedded in the lipid bilayer and involved in proton translocation. In Nyctomys sumichrasti (Sumichrast's vesper rat), this protein is NADH-ubiquinone oxidoreductase chain 4L (MT-ND4L).